The following is a 201-amino-acid chain: Pyridoxal 5'-phosphate synthase subunit PdxT (201 aa).

Gly48–Ser50 contacts L-glutamine. Cys80 (nucleophile) is an active-site residue. L-glutamine is bound by residues Arg109 and Ile137–Arg138. Active-site charge relay system residues include His180 and Glu182.

It belongs to the glutaminase PdxT/SNO family. As to quaternary structure, in the presence of PdxS, forms a dodecamer of heterodimers. Only shows activity in the heterodimer.

It catalyses the reaction aldehydo-D-ribose 5-phosphate + D-glyceraldehyde 3-phosphate + L-glutamine = pyridoxal 5'-phosphate + L-glutamate + phosphate + 3 H2O + H(+). The enzyme catalyses L-glutamine + H2O = L-glutamate + NH4(+). The protein operates within cofactor biosynthesis; pyridoxal 5'-phosphate biosynthesis. Catalyzes the hydrolysis of glutamine to glutamate and ammonia as part of the biosynthesis of pyridoxal 5'-phosphate. The resulting ammonia molecule is channeled to the active site of PdxS. This Cutibacterium acnes (strain DSM 16379 / KPA171202) (Propionibacterium acnes) protein is Pyridoxal 5'-phosphate synthase subunit PdxT.